The following is a 1003-amino-acid chain: Retinoblastoma-related protein 1 (1003 aa).

The tract at residues 405–607 is domain A; it reads TPVSTAMTTA…EKGSSMYNSL (203 aa). The interval 405 to 860 is pocket; the sequence is TPVSTAMTTA…NEMFIPSVKP (456 aa). Positions 608 to 729 are spacer; that stretch reads AVAKPSLAAE…PGGGGETCAE (122 aa). The interval 730-860 is domain B; the sequence is TAINVFFGKI…NEMFIPSVKP (131 aa). Residues 868 to 899 are disordered; it reads AGNNSEKNDHNDGQGPASPKPSPFPKLPDMSP.

This sequence belongs to the retinoblastoma protein (RB) family. In terms of tissue distribution, expressed in roots, stems, leaves and flowers.

It localises to the nucleus. Its function is as follows. Regulator of biological processes that recruits a histone deacetylase to control gene transcription. Formation of stable complexes with geminiviridae replication-associated proteins may create a cellular environment which favors viral DNA replication. May play a role in the entry into mitosis, negatively regulating the cell proliferation during leaf, stem, and flower development. Critical regulator of the endocycle. The polypeptide is Retinoblastoma-related protein 1 (RBR1) (Nicotiana benthamiana).